The following is a 707-amino-acid chain: Leukotoxin export ATP-binding protein LtxB (707 aa).

Residues 4-125 form the Peptidase C39 domain; that stretch reads QKNTNLALQA…ERYQSKVILI (122 aa). Histidine 83 is a catalytic residue. 5 helical membrane passes run 158–178, 191–211, 269–289, 295–315, and 387–407; these read LIVSIFLQIFALITPLFFQVV, LNVITVALAIVVLFEIILGGL, ALTSILDLLFSFIFFAVMWYY, LVVLGSLPCYVIWSVFISPIL, and AVMVINLWLGAHLVISGDLSI. An ABC transmembrane type-1 domain is found at 158 to 436; that stretch reads LIVSIFLQIF…LAQIWQDFQQ (279 aa). Residues 468-703 form the ABC transporter domain; it reads ISFRNIKFRY…EKGLYSYLHQ (236 aa). 502-509 contacts ATP; that stretch reads GRSGSGKS.

The protein belongs to the ABC transporter superfamily. Protein-1 exporter (TC 3.A.1.109) family. Probably part of a complex composed of LtxB, LtxD and TdeA, which forms a single transport channel across the two membranes.

It localises to the cell inner membrane. The enzyme catalyses ATP + H2O + proteinSide 1 = ADP + phosphate + proteinSide 2.. In terms of biological role, involved in the export of the LtxA leukotoxin. The chain is Leukotoxin export ATP-binding protein LtxB from Aggregatibacter actinomycetemcomitans (Actinobacillus actinomycetemcomitans).